The following is a 138-amino-acid chain: uncharacterized protein (138 aa).

The tract at residues 89–138 (DDYEDDFEDSDFQDGDFDDFEDEDGFDDDDDFEDDDFEYEDEDNDLDFDE) is disordered.

This is an uncharacterized protein from Treponema pallidum (strain Nichols).